The following is a 480-amino-acid chain: Glutamyl-tRNA(Gln) amidotransferase subunit A (480 aa).

Residues Lys-70 and Ser-145 each act as charge relay system in the active site. The active-site Acyl-ester intermediate is Ser-169.

Belongs to the amidase family. GatA subfamily. As to quaternary structure, heterotrimer of A, B and C subunits.

The enzyme catalyses L-glutamyl-tRNA(Gln) + L-glutamine + ATP + H2O = L-glutaminyl-tRNA(Gln) + L-glutamate + ADP + phosphate + H(+). Its function is as follows. Allows the formation of correctly charged Gln-tRNA(Gln) through the transamidation of misacylated Glu-tRNA(Gln) in organisms which lack glutaminyl-tRNA synthetase. The reaction takes place in the presence of glutamine and ATP through an activated gamma-phospho-Glu-tRNA(Gln). The polypeptide is Glutamyl-tRNA(Gln) amidotransferase subunit A (Lactobacillus delbrueckii subsp. bulgaricus (strain ATCC BAA-365 / Lb-18)).